The following is a 256-amino-acid chain: Trypsin CFT-1 (256 aa).

Residues 1–17 (MRVTLALVALCLASVAA) form the signal peptide. Residues 18 to 24 (LPEKQQR) constitute a propeptide, activation peptide. Residues 25 to 256 (IVGGSVTTIE…RFTAWIQANA (232 aa)) enclose the Peptidase S1 domain. A disulfide bond links Cys-55 and Cys-71. Active-site charge relay system residues include His-70 and Asp-115. 2 cysteine pairs are disulfide-bonded: Cys-180-Cys-197 and Cys-209-Cys-233. Ser-213 functions as the Charge relay system in the catalytic mechanism.

The protein belongs to the peptidase S1 family.

It localises to the secreted. Its subcellular location is the extracellular space. The catalysed reaction is Preferential cleavage: Arg-|-Xaa, Lys-|-Xaa.. Responsible for the activation of delta-endotoxin from Bacillus thuringiensis. This is Trypsin CFT-1 from Choristoneura fumiferana (Spruce budworm moth).